Here is a 208-residue protein sequence, read N- to C-terminus: Small ribosomal subunit protein eS8 (208 aa).

Residues 1-34 (MGISRDHWHKRRATGGKRAPIRKKRKYELGRPAA) are disordered. Residues 7-26 (HWHKRRATGGKRAPIRKKRK) are compositionally biased toward basic residues.

Belongs to the eukaryotic ribosomal protein eS8 family. Component of the small ribosomal subunit. Identified in a IGF2BP1-dependent mRNP granule complex containing untranslated mRNAs. Part of the small subunit (SSU) processome, composed of more than 70 proteins and the RNA chaperone small nucleolar RNA (snoRNA) U3.

The protein resides in the cytoplasm. Its subcellular location is the membrane. It localises to the nucleus. The protein localises to the nucleolus. Its function is as follows. Component of the small ribosomal subunit. The ribosome is a large ribonucleoprotein complex responsible for the synthesis of proteins in the cell. Part of the small subunit (SSU) processome, first precursor of the small eukaryotic ribosomal subunit. During the assembly of the SSU processome in the nucleolus, many ribosome biogenesis factors, an RNA chaperone and ribosomal proteins associate with the nascent pre-rRNA and work in concert to generate RNA folding, modifications, rearrangements and cleavage as well as targeted degradation of pre-ribosomal RNA by the RNA exosome. The sequence is that of Small ribosomal subunit protein eS8 (RpS8) from Spodoptera frugiperda (Fall armyworm).